Reading from the N-terminus, the 234-residue chain is tRNA1(Val) (adenine(37)-N6)-methyltransferase (234 aa).

The protein belongs to the methyltransferase superfamily. tRNA (adenine-N(6)-)-methyltransferase family.

It is found in the cytoplasm. It catalyses the reaction adenosine(37) in tRNA1(Val) + S-adenosyl-L-methionine = N(6)-methyladenosine(37) in tRNA1(Val) + S-adenosyl-L-homocysteine + H(+). Functionally, specifically methylates the adenine in position 37 of tRNA(1)(Val) (anticodon cmo5UAC). In Aliivibrio salmonicida (strain LFI1238) (Vibrio salmonicida (strain LFI1238)), this protein is tRNA1(Val) (adenine(37)-N6)-methyltransferase.